We begin with the raw amino-acid sequence, 225 residues long: Urease accessory protein UreF (225 aa).

This sequence belongs to the UreF family. As to quaternary structure, ureD, UreF and UreG form a complex that acts as a GTP-hydrolysis-dependent molecular chaperone, activating the urease apoprotein by helping to assemble the nickel containing metallocenter of UreC. The UreE protein probably delivers the nickel.

It is found in the cytoplasm. In terms of biological role, required for maturation of urease via the functional incorporation of the urease nickel metallocenter. This Arthrobacter sp. (strain FB24) protein is Urease accessory protein UreF.